Consider the following 162-residue polypeptide: UPF0305 protein MMP0665 (162 aa).

It belongs to the UPF0305 family.

The chain is UPF0305 protein MMP0665 from Methanococcus maripaludis (strain DSM 14266 / JCM 13030 / NBRC 101832 / S2 / LL).